A 133-amino-acid chain; its full sequence is Male-specific protein scotti (133 aa).

The interval 11–57 (FPSNGLGNNNNDPNQQRGERPRQPHPDLGWILDAPNEPPRNRNPLLY) is disordered. The span at 14-24 (NGLGNNNNDPN) shows a compositional bias: low complexity. An N-linked (GlcNAc...) asparagine glycan is attached at Asn-83.

Belongs to the male-specific scotti family.

Post-meiotically transcribed gene that has a role in late spermiogenesis; required for actin cone progression during spermatid individualization. In Drosophila persimilis (Fruit fly), this protein is Male-specific protein scotti.